A 144-amino-acid chain; its full sequence is 3-hydroxyacyl-[acyl-carrier-protein] dehydratase FabZ (144 aa).

Histidine 47 is a catalytic residue.

Belongs to the thioester dehydratase family. FabZ subfamily.

The protein resides in the cytoplasm. It carries out the reaction a (3R)-hydroxyacyl-[ACP] = a (2E)-enoyl-[ACP] + H2O. In terms of biological role, involved in unsaturated fatty acids biosynthesis. Catalyzes the dehydration of short chain beta-hydroxyacyl-ACPs and long chain saturated and unsaturated beta-hydroxyacyl-ACPs. The polypeptide is 3-hydroxyacyl-[acyl-carrier-protein] dehydratase FabZ (Nitrosomonas eutropha (strain DSM 101675 / C91 / Nm57)).